A 96-amino-acid polypeptide reads, in one-letter code: Muconolactone Delta-isomerase (96 aa).

It belongs to the muconolactone Delta-isomerase family. As to quaternary structure, homodecamer.

The catalysed reaction is (S)-muconolactone = (4,5-dihydro-5-oxofuran-2-yl)-acetate. The protein operates within aromatic compound metabolism; beta-ketoadipate pathway; 5-oxo-4,5-dihydro-2-furylacetate from catechol: step 3/3. In Pseudomonas aeruginosa (strain ATCC 15692 / DSM 22644 / CIP 104116 / JCM 14847 / LMG 12228 / 1C / PRS 101 / PAO1), this protein is Muconolactone Delta-isomerase (catC).